We begin with the raw amino-acid sequence, 223 residues long: Ribonuclease T (223 aa).

Positions 20-194 constitute an Exonuclease domain; that stretch reads VVIDVETAGF…YDTERTAELF (175 aa). 4 residues coordinate Mg(2+): Asp23, Glu25, His181, and Asp186. The active-site Proton donor/acceptor is His181.

The protein belongs to the RNase T family. Homodimer. Mg(2+) serves as cofactor.

Trims short 3' overhangs of a variety of RNA species, leaving a one or two nucleotide 3' overhang. Responsible for the end-turnover of tRNA: specifically removes the terminal AMP residue from uncharged tRNA (tRNA-C-C-A). Also appears to be involved in tRNA biosynthesis. In Shewanella sp. (strain W3-18-1), this protein is Ribonuclease T.